Consider the following 316-residue polypeptide: MNDVSKASLPKAIFLMGPTASGKTALAIELRKVLPVELISVDSALIYRGMDIGTAKPNADELKAAPHRLLDIRDPSQAYSAADFRRDALEQMAEITAAGRIPLLVGGTMLYFKALLEGLSPLPSADPEVRSRIEQQAAELGWEALHQQLQEIDPVAAARIHPNDPQRLSRALEVFFISGKTLTELTQTSGDALPYQVHQFAIAPASRELLHQRIELRFHQMLASGFEAEVRALFARGDLHTDLPSIRCVGYRQMWSYIEGEISYDEMVYRGVCATRQLAKRQMTWLRGWEGVRWLDSENPDRARKEVLQVVGAIAD.

Position 17–24 (17–24 (GPTASGKT)) interacts with ATP. 19-24 (TASGKT) lines the substrate pocket. Interaction with substrate tRNA regions lie at residues 42–45 (DSAL), 166–170 (QRLSR), and 247–252 (RCVGYR).

The protein belongs to the IPP transferase family. Monomer. Mg(2+) is required as a cofactor.

The catalysed reaction is adenosine(37) in tRNA + dimethylallyl diphosphate = N(6)-dimethylallyladenosine(37) in tRNA + diphosphate. Its function is as follows. Catalyzes the transfer of a dimethylallyl group onto the adenine at position 37 in tRNAs that read codons beginning with uridine, leading to the formation of N6-(dimethylallyl)adenosine (i(6)A). The sequence is that of tRNA dimethylallyltransferase from Salmonella newport (strain SL254).